Reading from the N-terminus, the 188-residue chain is Elongation factor P (188 aa).

N6-(3,6-diaminohexanoyl)-5-hydroxylysine is present on Lys34.

It belongs to the elongation factor P family. May be beta-lysylated on the epsilon-amino group of Lys-34 by the combined action of EpmA and EpmB, and then hydroxylated on the C5 position of the same residue by EpmC (if this protein is present). Lysylation is critical for the stimulatory effect of EF-P on peptide-bond formation. The lysylation moiety may extend toward the peptidyltransferase center and stabilize the terminal 3-CCA end of the tRNA. Hydroxylation of the C5 position on Lys-34 may allow additional potential stabilizing hydrogen-bond interactions with the P-tRNA.

The protein localises to the cytoplasm. The protein operates within protein biosynthesis; polypeptide chain elongation. In terms of biological role, involved in peptide bond synthesis. Alleviates ribosome stalling that occurs when 3 or more consecutive Pro residues or the sequence PPG is present in a protein, possibly by augmenting the peptidyl transferase activity of the ribosome. Modification of Lys-34 is required for alleviation. The polypeptide is Elongation factor P (Glaesserella parasuis serovar 5 (strain SH0165) (Haemophilus parasuis)).